A 187-amino-acid polypeptide reads, in one-letter code: Protein GrpE (187 aa).

Positions 1-31 (MEKKETKNDAEKNNKQDNKSTKSQKKENLNL) are disordered.

This sequence belongs to the GrpE family. Homodimer.

It localises to the cytoplasm. Participates actively in the response to hyperosmotic and heat shock by preventing the aggregation of stress-denatured proteins, in association with DnaK and GrpE. It is the nucleotide exchange factor for DnaK and may function as a thermosensor. Unfolded proteins bind initially to DnaJ; upon interaction with the DnaJ-bound protein, DnaK hydrolyzes its bound ATP, resulting in the formation of a stable complex. GrpE releases ADP from DnaK; ATP binding to DnaK triggers the release of the substrate protein, thus completing the reaction cycle. Several rounds of ATP-dependent interactions between DnaJ, DnaK and GrpE are required for fully efficient folding. The protein is Protein GrpE of Borrelia garinii subsp. bavariensis (strain ATCC BAA-2496 / DSM 23469 / PBi) (Borreliella bavariensis).